The primary structure comprises 253 residues: uncharacterized protein (253 aa).

This sequence belongs to the DcsA family.

This is an uncharacterized protein from Bacillus subtilis (strain 168).